Here is a 286-residue protein sequence, read N- to C-terminus: Bifunctional protein FolD (286 aa).

NADP(+) contacts are provided by residues 164 to 166, S193, and I234; that span reads GRS.

Belongs to the tetrahydrofolate dehydrogenase/cyclohydrolase family. Homodimer.

The enzyme catalyses (6R)-5,10-methylene-5,6,7,8-tetrahydrofolate + NADP(+) = (6R)-5,10-methenyltetrahydrofolate + NADPH. It carries out the reaction (6R)-5,10-methenyltetrahydrofolate + H2O = (6R)-10-formyltetrahydrofolate + H(+). It participates in one-carbon metabolism; tetrahydrofolate interconversion. Functionally, catalyzes the oxidation of 5,10-methylenetetrahydrofolate to 5,10-methenyltetrahydrofolate and then the hydrolysis of 5,10-methenyltetrahydrofolate to 10-formyltetrahydrofolate. This is Bifunctional protein FolD from Oleidesulfovibrio alaskensis (strain ATCC BAA-1058 / DSM 17464 / G20) (Desulfovibrio alaskensis).